The chain runs to 120 residues: Large ribosomal subunit protein bL12 (120 aa).

It belongs to the bacterial ribosomal protein bL12 family. As to quaternary structure, homodimer. Part of the ribosomal stalk of the 50S ribosomal subunit. Forms a multimeric L10(L12)X complex, where L10 forms an elongated spine to which 2 to 4 L12 dimers bind in a sequential fashion. Binds GTP-bound translation factors.

In terms of biological role, forms part of the ribosomal stalk which helps the ribosome interact with GTP-bound translation factors. Is thus essential for accurate translation. The polypeptide is Large ribosomal subunit protein bL12 (Shouchella clausii (strain KSM-K16) (Alkalihalobacillus clausii)).